Reading from the N-terminus, the 374-residue chain is Cysteine-type anaerobic sulfatase-maturating enzyme (374 aa).

One can recognise a Radical SAM core domain in the interval Met-1 to Lys-227. The [4Fe-4S] cluster site is built by Cys-15 and Cys-19. Position 21 (Tyr-21) interacts with S-adenosyl-L-methionine. Cys-22 provides a ligand contact to [4Fe-4S] cluster. Residues Gly-66, Ser-122, Arg-134, and Leu-195 each contribute to the S-adenosyl-L-methionine site. The [4Fe-4S] cluster site is built by Cys-255, Cys-261, and Cys-276. Asp-277 acts as the Proton acceptor in catalysis. Cys-317, Cys-320, Cys-326, Cys-330, and Cys-348 together coordinate [4Fe-4S] cluster.

Belongs to the radical SAM superfamily. Anaerobic sulfatase-maturating enzyme family. The cofactor is [4Fe-4S] cluster.

It catalyses the reaction L-cysteinyl-[sulfatase] + S-adenosyl-L-methionine + H2O = 3-oxo-L-alanyl-[sulfatase] + hydrogen sulfide + 5'-deoxyadenosine + L-methionine + 2 H(+). Its pathway is protein modification; sulfatase oxidation. Involved in 'Cys-type' sulfatase maturation under anaerobic conditions. Catalyzes the post-translational modification of cysteine into 3-oxoalanine (also known as C(alpha)-formylglycine (FGly)), by a free radical chemical mechanism initiated via the reductive cleavage of S-adenosyl-L-methionine (SAM). The chain is Cysteine-type anaerobic sulfatase-maturating enzyme from Clostridium novyi (strain NT).